The sequence spans 202 residues: Large ribosomal subunit protein uL13 (202 aa).

This sequence belongs to the universal ribosomal protein uL13 family.

This chain is Large ribosomal subunit protein uL13, found in Caenorhabditis elegans.